The primary structure comprises 445 residues: Nuclear hormone receptor family member nhr-1 (445 aa).

The tract at residues 19 to 55 (PMVNSQRNEDPSMYMNGSAASVSHTNGSSSMGNDQKF) is disordered. Residues 36 to 51 (SAASVSHTNGSSSMGN) are compositionally biased toward polar residues. A DNA-binding region (nuclear receptor) is located at residues 70–145 (GELCAVCSDL…VGMDAKALQI (76 aa)). NR C4-type zinc fingers lie at residues 73–93 (CAVC…CNGC) and 109–133 (CQYN…FNKC). The region spanning 179-444 (QDQEIIDQLT…PFVKELCMKR (266 aa)) is the NR LBD domain.

Belongs to the nuclear hormone receptor family.

The protein resides in the nucleus. Functionally, orphan nuclear receptor which acts in concert with the insulin/IGF-1-like signaling (IIS) pathway during osmotic stress, perhaps in response to a ligand modified by the sulfotransferase ssu-1. The polypeptide is Nuclear hormone receptor family member nhr-1 (nhr-1) (Caenorhabditis elegans).